Consider the following 486-residue polypeptide: Glutamyl-tRNA(Gln) amidotransferase subunit A (486 aa).

Catalysis depends on charge relay system residues lysine 78 and serine 153. Residue serine 177 is the Acyl-ester intermediate of the active site.

Belongs to the amidase family. GatA subfamily. In terms of assembly, heterotrimer of A, B and C subunits.

The enzyme catalyses L-glutamyl-tRNA(Gln) + L-glutamine + ATP + H2O = L-glutaminyl-tRNA(Gln) + L-glutamate + ADP + phosphate + H(+). Functionally, allows the formation of correctly charged Gln-tRNA(Gln) through the transamidation of misacylated Glu-tRNA(Gln) in organisms which lack glutaminyl-tRNA synthetase. The reaction takes place in the presence of glutamine and ATP through an activated gamma-phospho-Glu-tRNA(Gln). In Desulfosudis oleivorans (strain DSM 6200 / JCM 39069 / Hxd3) (Desulfococcus oleovorans), this protein is Glutamyl-tRNA(Gln) amidotransferase subunit A.